The primary structure comprises 950 residues: Coatomer subunit beta-2 (950 aa).

5 HEAT repeats span residues 92–126 (PEMI…LSEP), 127–164 (EVLE…LPHG), 275–312 (TAVR…TSHR), 313–350 (DVMV…ARNV), and 392–429 (EVAG…TNPK).

Oligomeric complex that consists of at least the alpha, beta, beta', gamma, delta, epsilon and zeta subunits.

It localises to the cytoplasm. The protein resides in the golgi apparatus membrane. Its subcellular location is the cytoplasmic vesicle. The protein localises to the COPI-coated vesicle membrane. In terms of biological role, the coatomer is a cytosolic protein complex that binds to dilysine motifs and reversibly associates with Golgi non-clathrin-coated vesicles, which further mediate biosynthetic protein transport from the ER, via the Golgi up to the trans Golgi network. Coatomer complex is required for budding from Golgi membranes, and is essential for the retrograde Golgi-to-ER transport of dilysine-tagged proteins. The sequence is that of Coatomer subunit beta-2 from Oryza sativa subsp. japonica (Rice).